A 564-amino-acid chain; its full sequence is Probable beta-glucosidase btgE (564 aa).

A signal peptide spans 1-18 (MRGAFLATAAAIAGTAMA). Residues 285–304 (ATSSVAPSSSPSKPAAPSGA) are disordered. N-linked (GlcNAc...) asparagine glycosylation occurs at N404. The active-site Proton donor is E405. E501 functions as the Nucleophile in the catalytic mechanism.

Belongs to the glycosyl hydrolase 17 family.

Its subcellular location is the secreted. The protein resides in the cell wall. The enzyme catalyses Hydrolysis of terminal, non-reducing beta-D-glucosyl residues with release of beta-D-glucose.. The protein operates within glycan metabolism; cellulose degradation. Its function is as follows. Beta-glucosidases are one of a number of cellulolytic enzymes involved in the degradation of cellulosic biomass. Catalyzes the last step releasing glucose from the inhibitory cellobiose. In Aspergillus clavatus (strain ATCC 1007 / CBS 513.65 / DSM 816 / NCTC 3887 / NRRL 1 / QM 1276 / 107), this protein is Probable beta-glucosidase btgE (btgE).